A 124-amino-acid chain; its full sequence is Seripauperin-19 (124 aa).

The first 20 residues, Met1–Ala20, serve as a signal peptide directing secretion.

It belongs to the SRP1/TIP1 family. Seripauperin subfamily.

This is Seripauperin-19 (PAU19) from Saccharomyces cerevisiae (strain ATCC 204508 / S288c) (Baker's yeast).